The sequence spans 289 residues: Putative 2-aminoethylphosphonate transport system permease protein PhnU (289 aa).

Transmembrane regions (helical) follow at residues 19 to 39 (WLLL…SLIV), 76 to 96 (FFAT…LVFI), 111 to 131 (FIAL…GSAG), 150 to 170 (FLYS…PLVM), 202 to 222 (VIFP…LLLT), and 254 to 274 (YTVA…LFSL). Residues 68–275 (LLNTLQIAFF…VLSLGLFSLY (208 aa)) enclose the ABC transmembrane type-1 domain.

Belongs to the binding-protein-dependent transport system permease family.

Its subcellular location is the cell inner membrane. Its function is as follows. Probably part of the PhnSTUV complex (TC 3.A.1.11.5) involved in 2-aminoethylphosphonate import. Probably responsible for the translocation of the substrate across the membrane. The sequence is that of Putative 2-aminoethylphosphonate transport system permease protein PhnU (phnU) from Salmonella paratyphi A (strain ATCC 9150 / SARB42).